A 387-amino-acid chain; its full sequence is Exodeoxyribonuclease 7 large subunit (387 aa).

The protein belongs to the XseA family. As to quaternary structure, heterooligomer composed of large and small subunits.

The protein resides in the cytoplasm. The catalysed reaction is Exonucleolytic cleavage in either 5'- to 3'- or 3'- to 5'-direction to yield nucleoside 5'-phosphates.. Bidirectionally degrades single-stranded DNA into large acid-insoluble oligonucleotides, which are then degraded further into small acid-soluble oligonucleotides. The sequence is that of Exodeoxyribonuclease 7 large subunit from Campylobacter jejuni subsp. doylei (strain ATCC BAA-1458 / RM4099 / 269.97).